We begin with the raw amino-acid sequence, 231 residues long: MNRLMIVSLLGIATALGGCVSPPPKPNDPYYAPVLPRTPLPAAQNNGAIYQAGFEQNLYDDRKAFRVGDIITITLNEKTQASKKANSDIQKDSKTKMGLTSLFGSGMTTNNPIGGGDLSLSAEYGGSRDAKGDSQAGQSNSLTGSITVTVAEVLPNGILSVRGEKWMTLNTGNELVRIAGLVRADDIATDNTVSSTRVADARITYSGTGAFADASQPGWLDRFFLSPLWPF.

The first 18 residues, 1-18 (MNRLMIVSLLGIATALGG), serve as a signal peptide directing secretion. C19 carries the N-palmitoyl cysteine lipid modification. C19 carries the S-diacylglycerol cysteine lipid modification. Residues 118–141 (LSLSAEYGGSRDAKGDSQAGQSNS) are disordered.

It belongs to the FlgH family. As to quaternary structure, the basal body constitutes a major portion of the flagellar organelle and consists of four rings (L,P,S, and M) mounted on a central rod.

The protein resides in the cell outer membrane. The protein localises to the bacterial flagellum basal body. Its function is as follows. Assembles around the rod to form the L-ring and probably protects the motor/basal body from shearing forces during rotation. This chain is Flagellar L-ring protein, found in Pseudomonas aeruginosa (strain UCBPP-PA14).